Consider the following 511-residue polypeptide: 2-isopropylmalate synthase (511 aa).

The Pyruvate carboxyltransferase domain occupies 6–269 (IIIFDTTLRD…YTDIKCENIF (264 aa)). Residues D15, H203, H205, and N239 each coordinate Mn(2+). Residues 394-511 (VLEKLSVISG…SLKVEERKMA (118 aa)) form a regulatory domain region.

This sequence belongs to the alpha-IPM synthase/homocitrate synthase family. LeuA type 1 subfamily. Homodimer. Mn(2+) is required as a cofactor.

It localises to the cytoplasm. It catalyses the reaction 3-methyl-2-oxobutanoate + acetyl-CoA + H2O = (2S)-2-isopropylmalate + CoA + H(+). It participates in amino-acid biosynthesis; L-leucine biosynthesis; L-leucine from 3-methyl-2-oxobutanoate: step 1/4. Catalyzes the condensation of the acetyl group of acetyl-CoA with 3-methyl-2-oxobutanoate (2-ketoisovalerate) to form 3-carboxy-3-hydroxy-4-methylpentanoate (2-isopropylmalate). The protein is 2-isopropylmalate synthase of Campylobacter jejuni subsp. jejuni serotype O:2 (strain ATCC 700819 / NCTC 11168).